A 252-amino-acid polypeptide reads, in one-letter code: tRNA (guanine-N(1)-)-methyltransferase (252 aa).

S-adenosyl-L-methionine is bound by residues Gly113 and 133-138 (IGDYVL).

It belongs to the RNA methyltransferase TrmD family. As to quaternary structure, homodimer.

Its subcellular location is the cytoplasm. The catalysed reaction is guanosine(37) in tRNA + S-adenosyl-L-methionine = N(1)-methylguanosine(37) in tRNA + S-adenosyl-L-homocysteine + H(+). Its function is as follows. Specifically methylates guanosine-37 in various tRNAs. The polypeptide is tRNA (guanine-N(1)-)-methyltransferase (Baumannia cicadellinicola subsp. Homalodisca coagulata).